The chain runs to 1423 residues: Protein phosphatase Slingshot homolog 2 (1423 aa).

The disordered stretch occupies residues M1 to I37. A compositionally biased stretch (low complexity) spans S9–P18. Phosphoserine is present on residues S17, S25, and S36. In terms of domain architecture, DEK-C spans E248 to G303. In terms of domain architecture, Tyrosine-protein phosphatase spans S307–A448. The Phosphocysteine intermediate role is filled by C392. S461, S487, S534, S631, and S633 each carry phosphoserine. Disordered stretches follow at residues T617–E641, Q664–N684, P696–A728, E797–P825, E840–Y862, L877–V954, F962–E981, T1019–L1041, S1070–S1108, and T1144–S1179. The segment covering K621–Q635 has biased composition (pro residues). The span at Q664–G680 shows a compositional bias: basic and acidic residues. Positions T889 to S904 are enriched in polar residues. A compositionally biased stretch (basic and acidic residues) spans P910–K932. Over residues E941 to T953 the composition is skewed to polar residues. The span at T1019–E1034 shows a compositional bias: polar residues. Over residues T1144–S1172 the composition is skewed to polar residues. S1217 is modified (phosphoserine). The residue at position 1422 (T1422) is a Phosphothreonine.

This sequence belongs to the protein-tyrosine phosphatase family. As to quaternary structure, interacts with filamentous actin.

The protein localises to the cytoplasm. It localises to the cytoskeleton. It is found in the cell junction. Its subcellular location is the focal adhesion. The protein resides in the cytoplasmic vesicle. The protein localises to the secretory vesicle. It localises to the acrosome. It carries out the reaction O-phospho-L-tyrosyl-[protein] + H2O = L-tyrosyl-[protein] + phosphate. The catalysed reaction is O-phospho-L-seryl-[protein] + H2O = L-seryl-[protein] + phosphate. The enzyme catalyses O-phospho-L-threonyl-[protein] + H2O = L-threonyl-[protein] + phosphate. Functionally, protein phosphatase which regulates actin filament dynamics. Dephosphorylates and activates the actin binding/depolymerizing factor cofilin, which subsequently binds to actin filaments and stimulates their disassembly. Inhibitory phosphorylation of cofilin is mediated by LIMK1, which may also be dephosphorylated and inactivated by this protein. Required for spermatogenesis. Involved in acrosome biogenesis, probably by regulating cofilin-mediated actin cytoskeleton remodeling during proacrosomal vesicle fusion and/or Golgi to perinuclear vesicle trafficking. The sequence is that of Protein phosphatase Slingshot homolog 2 (SSH2) from Homo sapiens (Human).